We begin with the raw amino-acid sequence, 366 residues long: Tetraacyldisaccharide 4'-kinase (366 aa).

Residue 51-58 (TVGGTGKT) participates in ATP binding.

It belongs to the LpxK family.

It catalyses the reaction a lipid A disaccharide + ATP = a lipid IVA + ADP + H(+). It participates in glycolipid biosynthesis; lipid IV(A) biosynthesis; lipid IV(A) from (3R)-3-hydroxytetradecanoyl-[acyl-carrier-protein] and UDP-N-acetyl-alpha-D-glucosamine: step 6/6. In terms of biological role, transfers the gamma-phosphate of ATP to the 4'-position of a tetraacyldisaccharide 1-phosphate intermediate (termed DS-1-P) to form tetraacyldisaccharide 1,4'-bis-phosphate (lipid IVA). This chain is Tetraacyldisaccharide 4'-kinase, found in Phocaeicola vulgatus (strain ATCC 8482 / DSM 1447 / JCM 5826 / CCUG 4940 / NBRC 14291 / NCTC 11154) (Bacteroides vulgatus).